We begin with the raw amino-acid sequence, 913 residues long: Protein translocase subunit SecA (913 aa).

Residues Gln87, Gly105 to Thr109, and Asp512 each bind ATP. Residues Cys897, Cys899, Cys908, and His909 each contribute to the Zn(2+) site.

This sequence belongs to the SecA family. In terms of assembly, monomer and homodimer. Part of the essential Sec protein translocation apparatus which comprises SecA, SecYEG and auxiliary proteins SecDF-YajC and YidC. The cofactor is Zn(2+).

Its subcellular location is the cell inner membrane. The protein resides in the cytoplasm. It catalyses the reaction ATP + H2O + cellular proteinSide 1 = ADP + phosphate + cellular proteinSide 2.. Its function is as follows. Part of the Sec protein translocase complex. Interacts with the SecYEG preprotein conducting channel. Has a central role in coupling the hydrolysis of ATP to the transfer of proteins into and across the cell membrane, serving both as a receptor for the preprotein-SecB complex and as an ATP-driven molecular motor driving the stepwise translocation of polypeptide chains across the membrane. The protein is Protein translocase subunit SecA of Pseudomonas savastanoi pv. phaseolicola (strain 1448A / Race 6) (Pseudomonas syringae pv. phaseolicola (strain 1448A / Race 6)).